The chain runs to 124 residues: Small ribosomal subunit protein bS6 (124 aa).

This sequence belongs to the bacterial ribosomal protein bS6 family.

In terms of biological role, binds together with bS18 to 16S ribosomal RNA. This Actinobacillus pleuropneumoniae serotype 5b (strain L20) protein is Small ribosomal subunit protein bS6.